Reading from the N-terminus, the 151-residue chain is Large ribosomal subunit protein uL15 (151 aa).

The tract at residues 1–45 is disordered; that stretch reads MNLSSLKPVKGSTKTCKRVGRGQGSGCGGTSTRGHKGQKSRSGYS. The segment covering 21 to 31 has biased composition (gly residues); the sequence is RGQGSGCGGTS.

This sequence belongs to the universal ribosomal protein uL15 family. Part of the 50S ribosomal subunit.

Functionally, binds to the 23S rRNA. This is Large ribosomal subunit protein uL15 from Azobacteroides pseudotrichonymphae genomovar. CFP2.